We begin with the raw amino-acid sequence, 136 residues long: ATP synthase epsilon chain, chloroplastic (136 aa).

This sequence belongs to the ATPase epsilon chain family. F-type ATPases have 2 components, CF(1) - the catalytic core - and CF(0) - the membrane proton channel. CF(1) has five subunits: alpha(3), beta(3), gamma(1), delta(1), epsilon(1). CF(0) has three main subunits: a, b and c.

The protein localises to the plastid. It localises to the chloroplast thylakoid membrane. Functionally, produces ATP from ADP in the presence of a proton gradient across the membrane. The chain is ATP synthase epsilon chain, chloroplastic from Cucumis sativus (Cucumber).